The chain runs to 173 residues: MAIILGVDPGSRITGYGVIQCQGRHQIYLGSGCIRTSSEELSGRLKQIFDGITEIIRQYQPDEFAIERVFMAKNADSALKLGQARGAAIVAATVANLPVAEYSATQIKSAVVGTGRAKKEQIQHMIQQLLKLPAAPQADAADALGVAVCHYHTRQSLIALSGRATARTYGRYR.

Active-site residues include Asp-8, Glu-67, and Asp-139. Mg(2+)-binding residues include Asp-8, Glu-67, and Asp-139.

Belongs to the RuvC family. Homodimer which binds Holliday junction (HJ) DNA. The HJ becomes 2-fold symmetrical on binding to RuvC with unstacked arms; it has a different conformation from HJ DNA in complex with RuvA. In the full resolvosome a probable DNA-RuvA(4)-RuvB(12)-RuvC(2) complex forms which resolves the HJ. Requires Mg(2+) as cofactor.

The protein resides in the cytoplasm. It carries out the reaction Endonucleolytic cleavage at a junction such as a reciprocal single-stranded crossover between two homologous DNA duplexes (Holliday junction).. Functionally, the RuvA-RuvB-RuvC complex processes Holliday junction (HJ) DNA during genetic recombination and DNA repair. Endonuclease that resolves HJ intermediates. Cleaves cruciform DNA by making single-stranded nicks across the HJ at symmetrical positions within the homologous arms, yielding a 5'-phosphate and a 3'-hydroxyl group; requires a central core of homology in the junction. The consensus cleavage sequence is 5'-(A/T)TT(C/G)-3'. Cleavage occurs on the 3'-side of the TT dinucleotide at the point of strand exchange. HJ branch migration catalyzed by RuvA-RuvB allows RuvC to scan DNA until it finds its consensus sequence, where it cleaves and resolves the cruciform DNA. The chain is Crossover junction endodeoxyribonuclease RuvC from Shewanella putrefaciens (strain CN-32 / ATCC BAA-453).